We begin with the raw amino-acid sequence, 314 residues long: tRNA dimethylallyltransferase (314 aa).

10–17 lines the ATP pocket; sequence GPTGVGKT. Position 12–17 (12–17) interacts with substrate; it reads TGVGKT. The tract at residues 35 to 38 is interaction with substrate tRNA; it reads DSMQ.

The protein belongs to the IPP transferase family. As to quaternary structure, monomer. Mg(2+) is required as a cofactor.

The catalysed reaction is adenosine(37) in tRNA + dimethylallyl diphosphate = N(6)-dimethylallyladenosine(37) in tRNA + diphosphate. In terms of biological role, catalyzes the transfer of a dimethylallyl group onto the adenine at position 37 in tRNAs that read codons beginning with uridine, leading to the formation of N6-(dimethylallyl)adenosine (i(6)A). The polypeptide is tRNA dimethylallyltransferase (Finegoldia magna (strain ATCC 29328 / DSM 20472 / WAL 2508) (Peptostreptococcus magnus)).